A 305-amino-acid polypeptide reads, in one-letter code: Olfactory receptor 9G9 (305 aa).

The Extracellular segment spans residues 1-27 (MQRSNHTVTEFILLGFTTDPGMQLGLF). Residue N5 is glycosylated (N-linked (GlcNAc...) asparagine). Residues 28–48 (VVFLGVYSLTVVGNSTLIVLI) form a helical membrane-spanning segment. Topologically, residues 49–64 (CNDSHLHTPMYFVVGN) are cytoplasmic. A helical membrane pass occupies residues 65-85 (LSFLDLWYSSVYTPKILVICI). Residues 86-96 (SEDKSISFAGC) are Extracellular-facing. The cysteines at positions 96 and 178 are disulfide-linked. The chain crosses the membrane as a helical span at residues 97–117 (LCQFFFSAGLAYSECCLLAAM). Residues 118-138 (AYDRYVAISKPLLYAQAMSIK) are Cytoplasmic-facing. Residues 139-159 (LCALLVAVSYCGGFINSSIIT) form a helical membrane-spanning segment. Residues 160 to 200 (KKTFSFNFCCENIIDDFFCDLLPLVKLACGEKGCYKFLMYF) lie on the Extracellular side of the membrane. A helical transmembrane segment spans residues 201-221 (LLASNVICPAVLILASYLFII). The Cytoplasmic segment spans residues 222 to 239 (TSVLRISSSQGRLKAFST). The helical transmembrane segment at 240–260 (CSSHLTSVTLYYGSILYIYAL) threads the bilayer. Residues 261-271 (PRSSYSFDMDK) are Extracellular-facing. A helical membrane pass occupies residues 272-291 (IVSTFYTEVLPMLNPMIYSL). Over 292–305 (RNKDVKEALKKLLP) the chain is Cytoplasmic.

Belongs to the G-protein coupled receptor 1 family.

It is found in the cell membrane. In terms of biological role, odorant receptor. This Homo sapiens (Human) protein is Olfactory receptor 9G9 (OR9G9).